A 455-amino-acid polypeptide reads, in one-letter code: Probable glycine dehydrogenase (decarboxylating) subunit 1 (455 aa).

This sequence belongs to the GcvP family. N-terminal subunit subfamily. In terms of assembly, the glycine cleavage system is composed of four proteins: P, T, L and H. In this organism, the P 'protein' is a heterodimer of two subunits.

The catalysed reaction is N(6)-[(R)-lipoyl]-L-lysyl-[glycine-cleavage complex H protein] + glycine + H(+) = N(6)-[(R)-S(8)-aminomethyldihydrolipoyl]-L-lysyl-[glycine-cleavage complex H protein] + CO2. In terms of biological role, the glycine cleavage system catalyzes the degradation of glycine. The P protein binds the alpha-amino group of glycine through its pyridoxal phosphate cofactor; CO(2) is released and the remaining methylamine moiety is then transferred to the lipoamide cofactor of the H protein. This is Probable glycine dehydrogenase (decarboxylating) subunit 1 from Francisella tularensis subsp. holarctica (strain LVS).